The chain runs to 232 residues: Ribose-5-phosphate isomerase A (232 aa).

Substrate-binding positions include 28 to 31, 83 to 86, and 96 to 99; these read TGST, DGAD, and KGGG. Glutamate 105 acts as the Proton acceptor in catalysis. Lysine 123 serves as a coordination point for substrate.

The protein belongs to the ribose 5-phosphate isomerase family. Homodimer.

It catalyses the reaction aldehydo-D-ribose 5-phosphate = D-ribulose 5-phosphate. Its pathway is carbohydrate degradation; pentose phosphate pathway; D-ribose 5-phosphate from D-ribulose 5-phosphate (non-oxidative stage): step 1/1. In terms of biological role, catalyzes the reversible conversion of ribose-5-phosphate to ribulose 5-phosphate. The chain is Ribose-5-phosphate isomerase A from Rhizobium leguminosarum bv. trifolii (strain WSM2304).